The primary structure comprises 527 residues: Arginine--tRNA ligase (527 aa).

Positions 112–122 (ANPTGPLHIGH) match the 'HIGH' region motif.

Belongs to the class-I aminoacyl-tRNA synthetase family. As to quaternary structure, monomer.

The protein resides in the cytoplasm. The catalysed reaction is tRNA(Arg) + L-arginine + ATP = L-arginyl-tRNA(Arg) + AMP + diphosphate. The polypeptide is Arginine--tRNA ligase (Nitratiruptor sp. (strain SB155-2)).